The following is a 224-amino-acid chain: Octanoyltransferase (224 aa).

Residues 45–223 (PSNKQAVWML…SLNKRFGLLW (179 aa)) enclose the BPL/LPL catalytic domain. Residues 87–94 (RGGDVTHH), 154–156 (SIG), and 167–169 (GIA) contribute to the substrate site. Cysteine 185 functions as the Acyl-thioester intermediate in the catalytic mechanism.

Belongs to the LipB family.

It is found in the cytoplasm. It catalyses the reaction octanoyl-[ACP] + L-lysyl-[protein] = N(6)-octanoyl-L-lysyl-[protein] + holo-[ACP] + H(+). The protein operates within protein modification; protein lipoylation via endogenous pathway; protein N(6)-(lipoyl)lysine from octanoyl-[acyl-carrier-protein]: step 1/2. Its function is as follows. Catalyzes the transfer of endogenously produced octanoic acid from octanoyl-acyl-carrier-protein onto the lipoyl domains of lipoate-dependent enzymes. Lipoyl-ACP can also act as a substrate although octanoyl-ACP is likely to be the physiological substrate. The sequence is that of Octanoyltransferase from Prochlorococcus marinus (strain SARG / CCMP1375 / SS120).